The primary structure comprises 161 residues: NADH-quinone oxidoreductase subunit C (161 aa).

It belongs to the complex I 30 kDa subunit family. As to quaternary structure, NDH-1 is composed of 14 different subunits. Subunits NuoB, C, D, E, F, and G constitute the peripheral sector of the complex.

It localises to the cell inner membrane. The catalysed reaction is a quinone + NADH + 5 H(+)(in) = a quinol + NAD(+) + 4 H(+)(out). NDH-1 shuttles electrons from NADH, via FMN and iron-sulfur (Fe-S) centers, to quinones in the respiratory chain. The immediate electron acceptor for the enzyme in this species is believed to be ubiquinone. Couples the redox reaction to proton translocation (for every two electrons transferred, four hydrogen ions are translocated across the cytoplasmic membrane), and thus conserves the redox energy in a proton gradient. The polypeptide is NADH-quinone oxidoreductase subunit C (Citrifermentans bemidjiense (strain ATCC BAA-1014 / DSM 16622 / JCM 12645 / Bem) (Geobacter bemidjiensis)).